The sequence spans 422 residues: Phagosome assembly factor 1 (422 aa).

The protein belongs to the PHAF1 family. Interacts with BCAS3; the interaction is requrired for the association with the phagophore.

It is found in the cytoplasm. It localises to the preautophagosomal structure. In terms of biological role, plays a regulatory role in autophagic activity. In complex with BCAS3, associates with the autophagosome formation site during both non-selective and selective autophagy. This is Phagosome assembly factor 1 from Homo sapiens (Human).